A 286-amino-acid polypeptide reads, in one-letter code: uncharacterized protein (286 aa).

Positions 54, 128, and 162 each coordinate NADP(+). Ser178 acts as the Proton donor in catalysis. NADP(+)-binding residues include Tyr192, Lys196, Ile225, and Thr227. The active-site Proton acceptor is the Tyr192. The active-site Lowers pKa of active site Tyr is the Lys196.

The protein belongs to the short-chain dehydrogenases/reductases (SDR) family.

This is an uncharacterized protein from Schizosaccharomyces pombe (strain 972 / ATCC 24843) (Fission yeast).